The following is a 187-amino-acid chain: Probable nicotinate-nucleotide adenylyltransferase (187 aa).

This sequence belongs to the NadD family.

It carries out the reaction nicotinate beta-D-ribonucleotide + ATP + H(+) = deamido-NAD(+) + diphosphate. Its pathway is cofactor biosynthesis; NAD(+) biosynthesis; deamido-NAD(+) from nicotinate D-ribonucleotide: step 1/1. In terms of biological role, catalyzes the reversible adenylation of nicotinate mononucleotide (NaMN) to nicotinic acid adenine dinucleotide (NaAD). The polypeptide is Probable nicotinate-nucleotide adenylyltransferase (Anaeromyxobacter sp. (strain K)).